We begin with the raw amino-acid sequence, 417 residues long: UDP-N-acetylglucosamine 1-carboxyvinyltransferase (417 aa).

Position 22 to 23 (22 to 23) interacts with phosphoenolpyruvate; it reads KN. R91 is a UDP-N-acetyl-alpha-D-glucosamine binding site. C115 serves as the catalytic Proton donor. At C115 the chain carries 2-(S-cysteinyl)pyruvic acid O-phosphothioketal. Residues 120–124, D304, and I326 each bind UDP-N-acetyl-alpha-D-glucosamine; that span reads RPVDL.

This sequence belongs to the EPSP synthase family. MurA subfamily.

It is found in the cytoplasm. It catalyses the reaction phosphoenolpyruvate + UDP-N-acetyl-alpha-D-glucosamine = UDP-N-acetyl-3-O-(1-carboxyvinyl)-alpha-D-glucosamine + phosphate. Its pathway is cell wall biogenesis; peptidoglycan biosynthesis. Functionally, cell wall formation. Adds enolpyruvyl to UDP-N-acetylglucosamine. In Nitratidesulfovibrio vulgaris (strain DP4) (Desulfovibrio vulgaris), this protein is UDP-N-acetylglucosamine 1-carboxyvinyltransferase.